The following is a 725-amino-acid chain: Manganese-exporting P-type ATPase (725 aa).

The 68-residue stretch at 25–92 (GRMRIQIEWV…AISGAAHVAA (68 aa)) folds into the HMA domain. Helical transmembrane passes span 101–119 (HSSDIRNIEVLRMAIGAAA), 142–160 (LVASGVTIFTGYPFLRGAL), 165–179 (TGTDALVSVATIASL), 188–202 (LAVLWLLNIGEYLQD), 335–359 (VGENFSRCFVPTSFVVSAITLAITK), and 365–383 (MTVLLIACPCAVGLATPTA). D416 functions as the 4-aspartylphosphate intermediate in the catalytic mechanism. Residues D416, T418, and D618 each contribute to the Mg(2+) site. Helical transmembrane passes span 669 to 688 (AVEVIRENYGMSIAVNAAGL) and 698 to 717 (PVLAAVLHNASSVAVVANSS).

It belongs to the cation transport ATPase (P-type) (TC 3.A.3) family. Type IB subfamily.

Its subcellular location is the cell membrane. The catalysed reaction is Mn(2+)(in) + ATP + H2O = Mn(2+)(out) + ADP + phosphate + H(+). In terms of biological role, high affinity, slow turnover Mn(2+) transporting ATPase. This is Manganese-exporting P-type ATPase (ctpC) from Mycobacterium leprae (strain TN).